The following is a 231-amino-acid chain: Uracil phosphoribosyltransferase (231 aa).

Residue 38–42 (KGLVR) coordinates GTP. 5-phospho-alpha-D-ribose 1-diphosphate contacts are provided by residues Arg-87, Arg-112, and 140–148 (DPMIATGST). Residues Ile-203 and 208–210 (GDA) each bind uracil. Asp-209 provides a ligand contact to 5-phospho-alpha-D-ribose 1-diphosphate.

This sequence belongs to the UPRTase family. Requires Mg(2+) as cofactor.

It catalyses the reaction UMP + diphosphate = 5-phospho-alpha-D-ribose 1-diphosphate + uracil. It functions in the pathway pyrimidine metabolism; UMP biosynthesis via salvage pathway; UMP from uracil: step 1/1. With respect to regulation, allosterically activated by GTP. Catalyzes the conversion of uracil and 5-phospho-alpha-D-ribose 1-diphosphate (PRPP) to UMP and diphosphate. In Methanococcus maripaludis (strain C6 / ATCC BAA-1332), this protein is Uracil phosphoribosyltransferase.